A 482-amino-acid polypeptide reads, in one-letter code: Solute carrier family 49 member A3 (482 aa).

The next 12 helical transmembrane spans lie at 41–61 (WFVL…WISF), 81–101 (YLSL…SWLI), 109–129 (AIVF…GAIV), 150–170 (LCAI…SVWF), 181–201 (IASM…PSVV), 206–226 (YIAH…ILAT), 264–284 (VILM…SSFL), 296–316 (LFAG…AFVC), 330–350 (VKTC…VINF), 355–375 (VLVA…SPVG), 390–410 (SSTG…MILF), and 437–457 (TSML…IIFF).

The protein belongs to the major facilitator superfamily.

The protein localises to the membrane. The sequence is that of Solute carrier family 49 member A3 (slc49a3) from Xenopus tropicalis (Western clawed frog).